The primary structure comprises 1245 residues: Pesticidal crystal protein Cry5Ba (1245 aa).

The disordered stretch occupies residues Pro-1219 to Gln-1245. Over residues Thr-1222–Gln-1245 the composition is skewed to low complexity.

The protein belongs to the delta endotoxin family.

Its function is as follows. Promotes colloidosmotic lysis by binding to the midgut epithelial cells of hymenopteran species. The sequence is that of Pesticidal crystal protein Cry5Ba (cry5Ba) from Bacillus thuringiensis.